Consider the following 394-residue polypeptide: UDP-glucose 6-dehydrogenase (394 aa).

NAD(+) is bound by residues 2–19, Val11, Asp29, Lys34, Thr83, Thr118, and Glu145; that span reads KIAI…AVLL. Substrate contacts are provided by residues 141-145, Lys203, Asn207, 248-252, and Gly256; these read EFLRE and YNNPS. Residue Tyr258 coordinates NAD(+). Cys259 serves as the catalytic Nucleophile. Lys262 provides a ligand contact to NAD(+). Residue Lys313 participates in substrate binding. Position 320 (Arg320) interacts with NAD(+).

This sequence belongs to the UDP-glucose/GDP-mannose dehydrogenase family.

The catalysed reaction is UDP-alpha-D-glucose + 2 NAD(+) + H2O = UDP-alpha-D-glucuronate + 2 NADH + 3 H(+). It participates in nucleotide-sugar biosynthesis; UDP-alpha-D-glucuronate biosynthesis; UDP-alpha-D-glucuronate from UDP-alpha-D-glucose: step 1/1. Its function is as follows. Catalyzes the formation of UDP-glucuronic acid which is required for capsular hyaluronic acid synthesis. Directly responsible for the transformation of some unencapsulated serotype-3 SP mutants to the encapsulated phenotype. In Streptococcus pneumoniae, this protein is UDP-glucose 6-dehydrogenase (cap3A).